Reading from the N-terminus, the 461-residue chain is MTEKQTWSQRFESALHPAIALFNASISFDIELIEYDLTGSQAHAQMLAHTGIISPAEGEQLVAGLEQIREEYRQGKFQPGIDAEDVHFAVERRLTEIVGDVGKKLHTARSRNDQVGTDTRLYLRDQILQIKTQLREFQRVLLDIAEKNVETLIPGYTHLQRAQPVSLAHHLLAYFQMAQRDWERLGDVYRRVNISPLGCGALAGTTFPIDRHYTAELLQFERIYENSLDGVSDRDFAIEFLCAASLIMVHLSRLSEEIILWASEEFRFVILKDSCATGSSIMPQKKNPDVPELVRGKTGRVFGHLQAMLVIMKGLPLAYNKDLQEDKEGLFDSVNTVKACLEAMTILLQEGLEFRTQRLAEAVTQDFSNATDVADYLAARGVPFREAYNIVGKVVKTSIAAGKLLKDLTLEEWQQIHPKFADDIYEAISPRQVVAARNSYGGTGFAQVSKAVSAARKEIGE.

The protein belongs to the lyase 1 family. Argininosuccinate lyase subfamily.

The protein resides in the cytoplasm. It carries out the reaction 2-(N(omega)-L-arginino)succinate = fumarate + L-arginine. Its pathway is amino-acid biosynthesis; L-arginine biosynthesis; L-arginine from L-ornithine and carbamoyl phosphate: step 3/3. Strongly inhibited by L-arginine. Inhibitory effects are lowered at pH 7.0 compared to those at pH 8.0. At 42 degrees Celsius and pH 8.0, activity decreases to 77% and 25% in the presence of 1 mM and 10 mM arginine, respectively. The other amino and organic acids do not affect activity. In terms of biological role, catalyzes the last step of arginine biosynthesis, the conversion of argininosuccinate into L-arginine and fumarate. The chain is Argininosuccinate lyase from Nostoc sp. (strain PCC 7120 / SAG 25.82 / UTEX 2576).